The sequence spans 450 residues: Phosphoglucosamine mutase (450 aa).

The Phosphoserine intermediate role is filled by serine 102. 4 residues coordinate Mg(2+): serine 102, aspartate 242, aspartate 244, and aspartate 246. Serine 102 bears the Phosphoserine mark.

The protein belongs to the phosphohexose mutase family. Mg(2+) is required as a cofactor. In terms of processing, activated by phosphorylation.

It carries out the reaction alpha-D-glucosamine 1-phosphate = D-glucosamine 6-phosphate. Its function is as follows. Catalyzes the conversion of glucosamine-6-phosphate to glucosamine-1-phosphate. In Staphylococcus haemolyticus (strain JCSC1435), this protein is Phosphoglucosamine mutase.